Here is a 433-residue protein sequence, read N- to C-terminus: NADH-ubiquinone oxidoreductase chain 4 (433 aa).

Transmembrane regions (helical) follow at residues 10-30 (LFFLINPYQIMIYLMIMTLFL), 45-65 (FFFFDLMSLSMVILTVWISIL), 80-100 (IFNFYLLLMMNLLFICFMLEN), 101-121 (LLMFYLFFEAVLFPIILMISG), 132-152 (GFYMLMYTVFGSLPLLILMLL), 169-189 (MGFIFFLMILGFLVKIPMFLF), 203-223 (AGSMILAGVLLKLGFYGLYRF), 234-254 (FSFVLIVISMWGAVLISIFCL), 261-281 (SLIAYSSVSHMGITLAGCVTF), 286-306 (SFGMLMMMIGHGLCSSGLFCL), 331-353 (LSMWWFLFSIINMSAPMTMNLFG), 366-386 (LLLSLPVMMMIFLSACYSMFM), and 410-430 (YLMLLHIIPMIMWFLKINFFM).

This sequence belongs to the complex I subunit 4 family.

The protein localises to the mitochondrion membrane. The catalysed reaction is a ubiquinone + NADH + 5 H(+)(in) = a ubiquinol + NAD(+) + 4 H(+)(out). Functionally, core subunit of the mitochondrial membrane respiratory chain NADH dehydrogenase (Complex I) that is believed to belong to the minimal assembly required for catalysis. Complex I functions in the transfer of electrons from NADH to the respiratory chain. The immediate electron acceptor for the enzyme is believed to be ubiquinone. This chain is NADH-ubiquinone oxidoreductase chain 4 (ND4), found in Rhipicephalus sanguineus (Brown dog tick).